The chain runs to 652 residues: Fimbrin-4 (652 aa).

4 Calponin-homology (CH) domains span residues 116–233 (ESEK…KIQL), 261–364 (LAPE…HHRN), 388–494 (SREE…RYTM), and 509–617 (DITE…NWSL). 2 actin-binding regions span residues 116-364 (ESEK…HHRN) and 388-617 (SREE…NWSL). A disordered region spans residues 623-652 (TESTVSDDTDVSSVTEEISNLSTDDGSSDV). A compositionally biased stretch (polar residues) spans 640–652 (ISNLSTDDGSSDV).

Interacts with F-actin.

Its subcellular location is the cytoplasm. The protein localises to the cytoskeleton. In terms of biological role, cross-links actin filaments (F-actin). Stabilizes and prevents F-actin depolymerization mediated by profilin. May regulate actin cytoarchitecture, cell cycle, cell division, cell elongation and cytoplasmic tractus. The sequence is that of Fimbrin-4 from Arabidopsis thaliana (Mouse-ear cress).